The following is a 192-amino-acid chain: Ethylene-responsive transcription factor ERF027 (192 aa).

The segment at residues valine 18–proline 74 is a DNA-binding region (AP2/ERF). Disordered stretches follow at residues cysteine 104–asparagine 132 and alanine 167–tyrosine 192. The span at aspartate 179–tyrosine 192 shows a compositional bias: acidic residues.

This sequence belongs to the AP2/ERF transcription factor family. ERF subfamily.

The protein localises to the nucleus. In terms of biological role, probably acts as a transcriptional activator. Binds to the GCC-box pathogenesis-related promoter element. May be involved in the regulation of gene expression by stress factors and by components of stress signal transduction pathways. This is Ethylene-responsive transcription factor ERF027 (ERF027) from Arabidopsis thaliana (Mouse-ear cress).